We begin with the raw amino-acid sequence, 67 residues long: MPQLDTSTWFITIVSMLLSLFILMQLKFIKFSSFSTPCPTTMEKTKHLTPWEMKWTKTYLPHSLPLP.

A helical membrane pass occupies residues 8–24; sequence TWFITIVSMLLSLFILM. Lys54 is subject to N6-acetyllysine; alternate. Residue Lys54 is modified to N6-succinyllysine; alternate. An N6-acetyllysine modification is found at Lys57.

It belongs to the ATPase protein 8 family. Component of the ATP synthase complex composed at least of ATP5F1A/subunit alpha, ATP5F1B/subunit beta, ATP5MC1/subunit c (homooctomer), MT-ATP6/subunit a, MT-ATP8/subunit 8, ATP5ME/subunit e, ATP5MF/subunit f, ATP5MG/subunit g, ATP5MK/subunit k, ATP5MJ/subunit j, ATP5F1C/subunit gamma, ATP5F1D/subunit delta, ATP5F1E/subunit epsilon, ATP5PF/subunit F6, ATP5PB/subunit b, ATP5PD/subunit d, ATP5PO/subunit OSCP. ATP synthase complex consists of a soluble F(1) head domain (subunits alpha(3) and beta(3)) - the catalytic core - and a membrane F(0) domain - the membrane proton channel (subunits c, a, 8, e, f, g, k and j). These two domains are linked by a central stalk (subunits gamma, delta, and epsilon) rotating inside the F1 region and a stationary peripheral stalk (subunits F6, b, d, and OSCP). Interacts with PRICKLE3.

The protein resides in the mitochondrion membrane. In terms of biological role, subunit 8, of the mitochondrial membrane ATP synthase complex (F(1)F(0) ATP synthase or Complex V) that produces ATP from ADP in the presence of a proton gradient across the membrane which is generated by electron transport complexes of the respiratory chain. ATP synthase complex consist of a soluble F(1) head domain - the catalytic core - and a membrane F(1) domain - the membrane proton channel. These two domains are linked by a central stalk rotating inside the F(1) region and a stationary peripheral stalk. During catalysis, ATP synthesis in the catalytic domain of F(1) is coupled via a rotary mechanism of the central stalk subunits to proton translocation. In vivo, can only synthesize ATP although its ATP hydrolase activity can be activated artificially in vitro. Part of the complex F(0) domain. The sequence is that of ATP synthase F(0) complex subunit 8 from Dasypus novemcinctus (Nine-banded armadillo).